The following is an 89-amino-acid chain: uncharacterized protein (89 aa).

The chain crosses the membrane as a helical span at residues 20–39 (SFAMTTYLNLFVKLLIFLYI).

It localises to the membrane. This is an uncharacterized protein from Escherichia coli (strain K12).